Consider the following 199-residue polypeptide: Achaete-scute homolog 1 (199 aa).

Residues 37 to 56 form a disordered region; it reads PAEEQQASKAKPIKRQRSAS. A bHLH domain is found at 81–133; that stretch reads AAVARRNERERNRVKLVNLGFATLREHVPNGAANKKMSKVETLRSAVEYIRAL. Positions 162–179 are enriched in polar residues; the sequence is HDMNSMAGSPVSSYSSDE. The disordered stretch occupies residues 162-189; that stretch reads HDMNSMAGSPVSSYSSDEGSYDPLSPEE.

In terms of assembly, efficient DNA binding requires dimerization with another bHLH protein. In terms of tissue distribution, neuronal precursor cells.

It localises to the nucleus. Transcription factor that plays a key role in neuronal differentiation: acts as a pioneer transcription factor, accessing closed chromatin to allow other factors to bind and activate neural pathways. Directly binds the E box motif (5'-CANNTG-3') on promoters and promotes transcription of neuronal genes. The combination of three transcription factors, ASCL1, POU3F2/BRN2 and MYT1L, is sufficient to reprogram fibroblasts and other somatic cells into induced neuronal (iN) cells in vitro. The chain is Achaete-scute homolog 1 (ascl1) from Xenopus laevis (African clawed frog).